Here is a 447-residue protein sequence, read N- to C-terminus: SNF1-related protein kinase regulatory subunit gamma-1-like (447 aa).

At Ala2 the chain carries N-acetylalanine. Ser35 bears the Phosphoserine mark. CBS domains are found at residues 54 to 120 (QVPG…SAEL), 214 to 275 (SFRW…GRDW), 292 to 350 (MSPN…PEVF), and 374 to 433 (LAIP…PNYF).

The protein belongs to the 5'-AMP-activated protein kinase gamma subunit family. Subunit of a probable heterotrimeric complex consisting of an alpha catalytic (KIN10 or KIN11) subunit, and a beta (KINB) and a gamma (KING or SNF4) non-catalytic regulatory subunits.

Regulatory subunit of the probable trimeric SNF1-related protein kinase (SnRK) complex, which may play a role in a signal transduction cascade regulating gene expression and carbohydrate metabolism in higher plants. The polypeptide is SNF1-related protein kinase regulatory subunit gamma-1-like (CBSCBS2) (Arabidopsis thaliana (Mouse-ear cress)).